Consider the following 322-residue polypeptide: Protein-L-isoaspartate O-methyltransferase (322 aa).

Residues 1–101 (MSGERAKRFP…AKQGDRSAAP (101 aa)) form a disordered region. The span at 14 to 29 (EDLKREPRKPEGRVAE) shows a compositional bias: basic and acidic residues. 2 stretches are compositionally biased toward low complexity: residues 33–51 (AGDA…PAAA) and 76–91 (HAPA…PQGG). Residue Ser-170 is part of the active site.

Belongs to the methyltransferase superfamily. L-isoaspartyl/D-aspartyl protein methyltransferase family.

It localises to the cytoplasm. It carries out the reaction [protein]-L-isoaspartate + S-adenosyl-L-methionine = [protein]-L-isoaspartate alpha-methyl ester + S-adenosyl-L-homocysteine. Its function is as follows. Catalyzes the methyl esterification of L-isoaspartyl residues in peptides and proteins that result from spontaneous decomposition of normal L-aspartyl and L-asparaginyl residues. It plays a role in the repair and/or degradation of damaged proteins. This Burkholderia mallei (strain NCTC 10247) protein is Protein-L-isoaspartate O-methyltransferase.